Consider the following 280-residue polypeptide: Pantothenate synthetase (280 aa).

An ATP-binding site is contributed by 31-38 (MGNLHVGH). The active-site Proton donor is H38. Q62 is a (R)-pantoate binding site. Q62 provides a ligand contact to beta-alanine. 150–153 (GKKD) contacts ATP. Q156 contributes to the (R)-pantoate binding site. ATP contacts are provided by residues V179 and 187–190 (MSSR).

Belongs to the pantothenate synthetase family. As to quaternary structure, homodimer.

The protein localises to the cytoplasm. It catalyses the reaction (R)-pantoate + beta-alanine + ATP = (R)-pantothenate + AMP + diphosphate + H(+). The protein operates within cofactor biosynthesis; (R)-pantothenate biosynthesis; (R)-pantothenate from (R)-pantoate and beta-alanine: step 1/1. Its function is as follows. Catalyzes the condensation of pantoate with beta-alanine in an ATP-dependent reaction via a pantoyl-adenylate intermediate. The chain is Pantothenate synthetase from Xanthomonas oryzae pv. oryzae (strain KACC10331 / KXO85).